The chain runs to 436 residues: Xylose isomerase (436 aa).

Residues H100 and D103 contribute to the active site. Residues E231, E267, H270, D295, D306, D308, and D338 each contribute to the Mg(2+) site.

This sequence belongs to the xylose isomerase family. In terms of assembly, homotetramer. Requires Mg(2+) as cofactor.

Its subcellular location is the cytoplasm. The catalysed reaction is alpha-D-xylose = alpha-D-xylulofuranose. The polypeptide is Xylose isomerase (Chelativorans sp. (strain BNC1)).